The sequence spans 149 residues: Cytochrome c-555 (149 aa).

Residues 1 to 20 (MKRTMIVVTTLLLGAGAVMA) form the signal peptide. Residues M32, C137, C140, and H141 each contribute to the heme c site.

In terms of assembly, monomer. Post-translationally, binds 1 heme c group covalently per subunit.

It is found in the periplasm. Its function is as follows. Low-spin monoheme cytochrome. In Bradyrhizobium diazoefficiens (strain JCM 10833 / BCRC 13528 / IAM 13628 / NBRC 14792 / USDA 110), this protein is Cytochrome c-555 (cycC).